Reading from the N-terminus, the 338-residue chain is 1-aminocyclopropane-1-carboxylate deaminase (338 aa).

K51 is modified (N6-(pyridoxal phosphate)lysine). S78 functions as the Nucleophile in the catalytic mechanism.

Belongs to the ACC deaminase/D-cysteine desulfhydrase family. In terms of assembly, homotrimer. Requires pyridoxal 5'-phosphate as cofactor.

It carries out the reaction 1-aminocyclopropane-1-carboxylate + H2O = 2-oxobutanoate + NH4(+). Catalyzes a cyclopropane ring-opening reaction, the irreversible conversion of 1-aminocyclopropane-1-carboxylate (ACC) to ammonia and alpha-ketobutyrate. Allows growth on ACC as a nitrogen source. This Pseudomonas putida (Arthrobacter siderocapsulatus) protein is 1-aminocyclopropane-1-carboxylate deaminase.